Here is a 360-residue protein sequence, read N- to C-terminus: Protein Wnt-2 (360 aa).

Residues 1–25 (MNAPLGGIWPWLPLLLTWLTPEVSS) form the signal peptide. 11 disulfide bridges follow: Cys-76/Cys-87, Cys-127/Cys-135, Cys-137/Cys-157, Cys-206/Cys-220, Cys-208/Cys-215, Cys-278/Cys-309, Cys-294/Cys-304, Cys-308/Cys-348, Cys-324/Cys-339, Cys-326/Cys-336, and Cys-331/Cys-332. Ser-212 is lipidated: O-palmitoleoyl serine; by PORCN. An N-linked (GlcNAc...) asparagine glycan is attached at Asn-295.

This sequence belongs to the Wnt family. Palmitoleoylation is required for efficient binding to frizzled receptors. Depalmitoleoylation leads to Wnt signaling pathway inhibition.

It localises to the secreted. Its subcellular location is the extracellular space. The protein resides in the extracellular matrix. Functionally, ligand for members of the frizzled family of seven transmembrane receptors. Functions in the canonical Wnt signaling pathway that results in activation of transcription factors of the TCF/LEF family. Functions as a upstream regulator of FGF10 expression. Plays an important role in embryonic lung development. May contribute to embryonic brain development by regulating the proliferation of dopaminergic precursors and neurons. In Felis catus (Cat), this protein is Protein Wnt-2 (WNT2).